Reading from the N-terminus, the 350-residue chain is 4-hydroxy-3-methylbut-2-enyl diphosphate reductase (350 aa).

Cys19 contributes to the [4Fe-4S] cluster binding site. (2E)-4-hydroxy-3-methylbut-2-enyl diphosphate is bound by residues His48 and His84. Residues His48 and His84 each coordinate dimethylallyl diphosphate. Isopentenyl diphosphate is bound by residues His48 and His84. Residue Cys106 participates in [4Fe-4S] cluster binding. His134 contacts (2E)-4-hydroxy-3-methylbut-2-enyl diphosphate. His134 is a dimethylallyl diphosphate binding site. His134 contacts isopentenyl diphosphate. The active-site Proton donor is the Glu136. Thr175 provides a ligand contact to (2E)-4-hydroxy-3-methylbut-2-enyl diphosphate. Position 205 (Cys205) interacts with [4Fe-4S] cluster. 4 residues coordinate (2E)-4-hydroxy-3-methylbut-2-enyl diphosphate: Ser233, Ser234, Asn235, and Ser278. Dimethylallyl diphosphate contacts are provided by Ser233, Ser234, Asn235, and Ser278. 4 residues coordinate isopentenyl diphosphate: Ser233, Ser234, Asn235, and Ser278.

It belongs to the IspH family. Requires [4Fe-4S] cluster as cofactor.

It catalyses the reaction isopentenyl diphosphate + 2 oxidized [2Fe-2S]-[ferredoxin] + H2O = (2E)-4-hydroxy-3-methylbut-2-enyl diphosphate + 2 reduced [2Fe-2S]-[ferredoxin] + 2 H(+). The enzyme catalyses dimethylallyl diphosphate + 2 oxidized [2Fe-2S]-[ferredoxin] + H2O = (2E)-4-hydroxy-3-methylbut-2-enyl diphosphate + 2 reduced [2Fe-2S]-[ferredoxin] + 2 H(+). The protein operates within isoprenoid biosynthesis; dimethylallyl diphosphate biosynthesis; dimethylallyl diphosphate from (2E)-4-hydroxy-3-methylbutenyl diphosphate: step 1/1. Its pathway is isoprenoid biosynthesis; isopentenyl diphosphate biosynthesis via DXP pathway; isopentenyl diphosphate from 1-deoxy-D-xylulose 5-phosphate: step 6/6. Catalyzes the conversion of 1-hydroxy-2-methyl-2-(E)-butenyl 4-diphosphate (HMBPP) into a mixture of isopentenyl diphosphate (IPP) and dimethylallyl diphosphate (DMAPP). Acts in the terminal step of the DOXP/MEP pathway for isoprenoid precursor biosynthesis. In Brucella anthropi (strain ATCC 49188 / DSM 6882 / CCUG 24695 / JCM 21032 / LMG 3331 / NBRC 15819 / NCTC 12168 / Alc 37) (Ochrobactrum anthropi), this protein is 4-hydroxy-3-methylbut-2-enyl diphosphate reductase.